The chain runs to 124 residues: Small ribosomal subunit protein uS12 (124 aa).

Residues 105–124 (QGVKNRKQARSRYGAKKEKG) are disordered. Residues 108 to 118 (KNRKQARSRYG) show a composition bias toward basic residues.

The protein belongs to the universal ribosomal protein uS12 family. As to quaternary structure, part of the 30S ribosomal subunit. Contacts proteins S8 and S17. May interact with IF1 in the 30S initiation complex.

In terms of biological role, with S4 and S5 plays an important role in translational accuracy. Interacts with and stabilizes bases of the 16S rRNA that are involved in tRNA selection in the A site and with the mRNA backbone. Located at the interface of the 30S and 50S subunits, it traverses the body of the 30S subunit contacting proteins on the other side and probably holding the rRNA structure together. The combined cluster of proteins S8, S12 and S17 appears to hold together the shoulder and platform of the 30S subunit. The sequence is that of Small ribosomal subunit protein uS12 (rpsL) from Mycobacterium bovis (strain ATCC BAA-935 / AF2122/97).